The chain runs to 195 residues: Glycerol-3-phosphate acyltransferase (195 aa).

Transmembrane regions (helical) follow at residues 7 to 27 (IFILCYLIGSIPFGFILSYVI), 52 to 72 (LALLTLLLDALKSFICVAIAQ), 80 to 100 (ILFLAALFAIIGHMFPVYLFF), 113 to 133 (LIFIDYRVAVCFLTFWIICFL), and 147 to 167 (LIALLFICTCYTIVQSVIFTI).

The protein belongs to the PlsY family. As to quaternary structure, probably interacts with PlsX.

Its subcellular location is the cell inner membrane. The enzyme catalyses an acyl phosphate + sn-glycerol 3-phosphate = a 1-acyl-sn-glycero-3-phosphate + phosphate. The protein operates within lipid metabolism; phospholipid metabolism. In terms of biological role, catalyzes the transfer of an acyl group from acyl-phosphate (acyl-PO(4)) to glycerol-3-phosphate (G3P) to form lysophosphatidic acid (LPA). This enzyme utilizes acyl-phosphate as fatty acyl donor, but not acyl-CoA or acyl-ACP. The chain is Glycerol-3-phosphate acyltransferase from Ehrlichia ruminantium (strain Welgevonden).